We begin with the raw amino-acid sequence, 98 residues long: Large ribosomal subunit protein uL23 (98 aa).

This sequence belongs to the universal ribosomal protein uL23 family. As to quaternary structure, part of the 50S ribosomal subunit. Contacts protein L29, and trigger factor when it is bound to the ribosome.

One of the early assembly proteins it binds 23S rRNA. One of the proteins that surrounds the polypeptide exit tunnel on the outside of the ribosome. Forms the main docking site for trigger factor binding to the ribosome. The polypeptide is Large ribosomal subunit protein uL23 (Rickettsia africae (strain ESF-5)).